Reading from the N-terminus, the 101-residue chain is Small ribosomal subunit protein uS14 (101 aa).

This sequence belongs to the universal ribosomal protein uS14 family. In terms of assembly, part of the 30S ribosomal subunit. Contacts proteins S3 and S10.

Its function is as follows. Binds 16S rRNA, required for the assembly of 30S particles and may also be responsible for determining the conformation of the 16S rRNA at the A site. The polypeptide is Small ribosomal subunit protein uS14 (Hahella chejuensis (strain KCTC 2396)).